The chain runs to 389 residues: Chalcone synthase 3 (389 aa).

Residue Cys164 is part of the active site.

This sequence belongs to the thiolase-like superfamily. Chalcone/stilbene synthases family.

It carries out the reaction (E)-4-coumaroyl-CoA + 3 malonyl-CoA + 3 H(+) = 2',4,4',6'-tetrahydroxychalcone + 3 CO2 + 4 CoA. It functions in the pathway secondary metabolite biosynthesis; flavonoid biosynthesis. Its function is as follows. The primary product of this enzyme is 4,2',4',6'-tetrahydroxychalcone (also termed naringenin-chalcone or chalcone) which can under specific conditions spontaneously isomerize into naringenin. In Trifolium subterraneum (Subterranean clover), this protein is Chalcone synthase 3 (CHS3).